A 218-amino-acid chain; its full sequence is Glutathione S-transferase-like protein OpS6 (218 aa).

In terms of domain architecture, GST N-terminal spans 5-86; it reads QPIKLYAHKK…YLIEQYDKDG (82 aa). The GST C-terminal domain occupies 92–218; sequence SLQDKSLARA…KIAATKAALA (127 aa).

Belongs to the GST superfamily.

Its pathway is secondary metabolite biosynthesis. Its function is as follows. Glutathione S-transferase-like protein; part of the gene cluster that mediates the biosynthesis of the bibenzoquinone oosporein, a metabolite required for fungal virulence that acts by evading host immunity to facilitate fungal multiplication in insects. The non-reducing polyketide synthase OpS1 produces orsellinic acid by condensing acetyl-CoA with 3 malonyl-CoA units. Orsellinic acid is then hydroxylated to benzenetriol by the hydroxylase OpS4. The intermediate is oxidized either nonenzymatically to 5,5'-dideoxy-oosporein or enzymatically to benzenetetrol by the oxidoreductase OpS7. The latter is further dimerized to oosporein by the catalase OpS5. OpS6 probably functions en route for protecting cells against oxidative stress by scavenging any leaked free radical form of benzenetetrol by activating the thiol group of glutathione. The polypeptide is Glutathione S-transferase-like protein OpS6 (Beauveria bassiana (strain ARSEF 2860) (White muscardine disease fungus)).